A 512-amino-acid polypeptide reads, in one-letter code: GMP synthase [glutamine-hydrolyzing] (512 aa).

The 190-residue stretch at 9–198 (GVLVVDFGGQ…WLSLVGAPRT (190 aa)) folds into the Glutamine amidotransferase type-1 domain. The active-site Nucleophile is Cys-87. Active-site residues include His-173 and Glu-175. The GMPS ATP-PPase domain occupies 199–387 (WRPGDMVSEL…LGVPRELIWK (189 aa)). Position 226-232 (226-232 (SGGVDST)) interacts with ATP.

The enzyme catalyses XMP + L-glutamine + ATP + H2O = GMP + L-glutamate + AMP + diphosphate + 2 H(+). Its pathway is purine metabolism; GMP biosynthesis; GMP from XMP (L-Gln route): step 1/1. In terms of biological role, catalyzes the synthesis of GMP from XMP. In Aeropyrum pernix (strain ATCC 700893 / DSM 11879 / JCM 9820 / NBRC 100138 / K1), this protein is GMP synthase [glutamine-hydrolyzing] (guaA).